Reading from the N-terminus, the 257-residue chain is Snake venom serine protease Dav-KN (257 aa).

The signal sequence occupies residues 1-18 (MVLIRVLANLLILQLSYA). Positions 19–24 (QKSSEL) are excised as a propeptide. The region spanning 25-248 (VIGGDECNIN…HLDWIKGIIA (224 aa)) is the Peptidase S1 domain. Intrachain disulfides connect Cys-31-Cys-162, Cys-49-Cys-65, Cys-97-Cys-255, Cys-173-Cys-188, and Cys-199-Cys-224. Residues His-64 and Asp-109 each act as charge relay system in the active site. Ser-203 acts as the Charge relay system in catalysis.

It belongs to the peptidase S1 family. Snake venom subfamily. Monomer. As to expression, expressed by the venom gland.

It localises to the secreted. Functionally, snake venom serine protease that may act in the hemostasis system of the prey. The sequence is that of Snake venom serine protease Dav-KN from Deinagkistrodon acutus (Hundred-pace snake).